A 294-amino-acid polypeptide reads, in one-letter code: tRNA pseudouridine synthase B (294 aa).

Aspartate 39 acts as the Nucleophile in catalysis.

The protein belongs to the pseudouridine synthase TruB family. Type 1 subfamily.

It catalyses the reaction uridine(55) in tRNA = pseudouridine(55) in tRNA. In terms of biological role, responsible for synthesis of pseudouridine from uracil-55 in the psi GC loop of transfer RNAs. The chain is tRNA pseudouridine synthase B from Streptococcus agalactiae serotype Ia (strain ATCC 27591 / A909 / CDC SS700).